Here is a 783-residue protein sequence, read N- to C-terminus: Protein SEY1 (783 aa).

At 1–677 (MTSQAIQLID…KRSIVTSSTH (677 aa)) the chain is on the cytoplasmic side. One can recognise a GB1/RHD3-type G domain in the interval 33–265 (GFNYHVISVF…YLLKPNYHHK (233 aa)). Position 43-50 (43-50 (GSQSSGKS)) interacts with GTP. Positions 449–472 (HEKKLQLRESELNALLSKIKKQLT) form a coiled coil. The helical transmembrane segment at 678–698 (IPIWIYAVIVVLGWNEFMIVI) threads the bilayer. At 699-701 (RNP) the chain is on the lumenal side. A helical membrane pass occupies residues 702–722 (LFVTLALLSIVSFYFIQKFGL). Residues 723-783 (WGPVMNVVNT…SSSSGNEDSD (61 aa)) lie on the Cytoplasmic side of the membrane.

This sequence belongs to the TRAFAC class dynamin-like GTPase superfamily. GB1/RHD3 GTPase family. RHD3 subfamily.

Its subcellular location is the endoplasmic reticulum membrane. Functionally, cooperates with the reticulon proteins and tubule-shaping DP1 family proteins to generate and maintain the structure of the tubular endoplasmic reticulum network. Has GTPase activity, which is required for its function in ER organization. The protein is Protein SEY1 of Candida glabrata (strain ATCC 2001 / BCRC 20586 / JCM 3761 / NBRC 0622 / NRRL Y-65 / CBS 138) (Yeast).